Here is a 145-residue protein sequence, read N- to C-terminus: Large ribosomal subunit protein uL15 (145 aa).

A disordered region spans residues 20–54 (GRGMASGKGKTATRGHKGQNSRSGGGVRPGFEGGQ). Positions 42–52 (SGGGVRPGFEG) are enriched in gly residues.

Belongs to the universal ribosomal protein uL15 family. Part of the 50S ribosomal subunit.

Binds to the 23S rRNA. The chain is Large ribosomal subunit protein uL15 from Mycoplasma mycoides subsp. mycoides SC (strain CCUG 32753 / NCTC 10114 / PG1).